The primary structure comprises 472 residues: Probable endopolygalacturonase D (472 aa).

The signal sequence occupies residues 1 to 16; it reads MKRGALLVPFVPLALA. The N-linked (GlcNAc...) asparagine glycan is linked to Asn24. Cys129 and Cys144 are disulfide-bonded. PbH1 repeat units follow at residues 236 to 258, 259 to 297, and 298 to 319; these read MYYS…DIEH, TENL…DIKS, and STNL…AVSS. N-linked (GlcNAc...) asparagine glycosylation occurs at Asn300. Asp312 serves as the catalytic Proton donor. A disulfide bridge links Cys314 with Cys330. His334 is a catalytic residue. 4 PbH1 repeats span residues 349 to 370, 378 to 400, 412 to 433, and 444 to 467; these read VDGV…RIKS, VSNI…DIQQ, TNGV…SDGK, and CSNF…YPTD. 3 N-linked (GlcNAc...) asparagine glycosylation sites follow: Asn361, Asn385, and Asn419. 2 cysteine pairs are disulfide-bonded: Cys439–Cys444 and Cys462–Cys469.

It belongs to the glycosyl hydrolase 28 family.

The protein localises to the secreted. It carries out the reaction (1,4-alpha-D-galacturonosyl)n+m + H2O = (1,4-alpha-D-galacturonosyl)n + (1,4-alpha-D-galacturonosyl)m.. Functionally, involved in maceration and soft-rotting of plant tissue. Hydrolyzes the 1,4-alpha glycosidic bonds of de-esterified pectate in the smooth region of the plant cell wall. This is Probable endopolygalacturonase D (pgaD) from Neosartorya fischeri (strain ATCC 1020 / DSM 3700 / CBS 544.65 / FGSC A1164 / JCM 1740 / NRRL 181 / WB 181) (Aspergillus fischerianus).